Consider the following 241-residue polypeptide: Proteasome subunit alpha type-5 (241 aa).

The protein belongs to the peptidase T1A family. As to quaternary structure, the 26S proteasome consists of a 20S proteasome core and two 19S regulatory subunits. The 20S proteasome core is composed of 28 subunits that are arranged in four stacked rings, resulting in a barrel-shaped structure. The two end rings are each formed by seven alpha subunits, and the two central rings are each formed by seven beta subunits. The catalytic chamber with the active sites is on the inside of the barrel.

The protein resides in the cytoplasm. Its subcellular location is the nucleus. The proteasome is a multicatalytic proteinase complex which is characterized by its ability to cleave peptides with Arg, Phe, Tyr, Leu, and Glu adjacent to the leaving group at neutral or slightly basic pH. The proteasome has an ATP-dependent proteolytic activity. The chain is Proteasome subunit alpha type-5 (psmA5) from Dictyostelium discoideum (Social amoeba).